A 77-amino-acid polypeptide reads, in one-letter code: Sec-independent protein translocase protein TatA (77 aa).

A helical membrane pass occupies residues 3–23 (VFGIGLPELIVILVVALLIFG). A disordered region spans residues 56–77 (TAALEEEQQAKAEAESPREISP). Over residues 63–77 (QQAKAEAESPREISP) the composition is skewed to basic and acidic residues.

The protein belongs to the TatA/E family. In terms of assembly, forms a complex with TatC.

Its subcellular location is the cell inner membrane. Its function is as follows. Part of the twin-arginine translocation (Tat) system that transports large folded proteins containing a characteristic twin-arginine motif in their signal peptide across membranes. TatA could form the protein-conducting channel of the Tat system. This chain is Sec-independent protein translocase protein TatA, found in Thermosynechococcus vestitus (strain NIES-2133 / IAM M-273 / BP-1).